A 664-amino-acid chain; its full sequence is Macoilin-1 (664 aa).

The next 4 helical transmembrane spans lie at 28–48 (TFLY…DFVL), 75–95 (AFSV…LLFI), 120–140 (VCLP…AIRF), and 154–174 (FAAH…KSYV). Residues 206-225 (QMLQRQERETEEATSKGMSE) are disordered. The span at 210-219 (RQERETEEAT) shows a compositional bias: basic and acidic residues. 5 N-linked (GlcNAc...) asparagine glycosylation sites follow: N234, N336, N339, N348, and N655. Disordered stretches follow at residues 315–364 (VGAG…LAPH) and 644–664 (FMDT…PLKK). A compositionally biased stretch (low complexity) spans 334–348 (SHNSTNGSVPSSSSN). Residues 644 to 658 (FMDTSPSSLDPNASV) show a composition bias toward polar residues.

The protein belongs to the macoilin family.

The protein resides in the nucleus membrane. The protein localises to the rough endoplasmic reticulum membrane. Functionally, may play a role in the regulation of neuronal activity. This chain is Macoilin-1, found in Danio rerio (Zebrafish).